A 571-amino-acid chain; its full sequence is MSFKMTQNQYTSLYGPTVGDSIRLGDTNLFAQIEKDYAVYGEEATFGGGKSIRDGMAQNPRVTRDDVNVADLVISNAVIIDYDKVVKADIGIKNGYIFAIGNAGNPDIMDNVDIIIGSTTDIIAAEGKIVTAGGIDTHVHFINPEQAEVALESGITTHIGGGTGASEGSKATTVTPGPWHIHRMLEAAEGLPINVGFTGKGQATNPTALIEQINAGAIGLKVHEDWGATPSALSHALDVADEFDVQIALHADTLNEAGFMEDTMAAVKDRVLHMYHTEGAGGGHAPDLIKSAAFSNILPSSTNPTLPYTHNTVDEHLDMVMITHHLNAAIPEDIAFADSRIRKETIAAEDVLQDMGVFSMISSDSQAMGRVGEVITRTWQVAHRMKEQRGPLDGDFEHNDNNRIKRYIAKYTINPAITHGISEYVGSIEPGKLADIVLWDPIFFGVKPELVVKGGLINSAVNGDANGSIPTSEPMKYRKMYGQYGGNLTSTSMTFVSKTAYENGINRALNLKRMVRPVKNIRQLSKADMKNNSATPKLDVDPQTYEVYVDGENITSNAATELPLTQRYFLF.

Ni(2+) is bound by residues His-138, His-140, and Lys-221. Position 221 is an N6-carboxylysine (Lys-221). His-223 contributes to the substrate binding site. Residues His-250 and His-276 each contribute to the Ni(2+) site. The active-site Proton donor is His-324. Residue Asp-364 participates in Ni(2+) binding.

Belongs to the metallo-dependent hydrolases superfamily. Urease alpha subunit family. In terms of assembly, heterotrimer of UreA (gamma), UreB (beta) and UreC (alpha) subunits. Three heterotrimers associate to form the active enzyme. The cofactor is Ni cation. Post-translationally, carboxylation allows a single lysine to coordinate two nickel ions.

It localises to the cytoplasm. It carries out the reaction urea + 2 H2O + H(+) = hydrogencarbonate + 2 NH4(+). It functions in the pathway nitrogen metabolism; urea degradation; CO(2) and NH(3) from urea (urease route): step 1/1. This chain is Urease subunit alpha, found in Staphylococcus aureus (strain JH9).